The following is a 244-amino-acid chain: MDALVLFLQLLVLLLTLPLHLLALLGCWQPICKTYFPYFMAMLTARSYKKMESKKRELFSQIKDLKGTSGNVALLELGCGTGANFQFYPQGCKVTCVDPNPNFEKFLTKSMAENRHLQYERFIVAYGENMKQLADSSMDVVVCTLVLCSVQSPRKVLQEVQRVLRPGGLLFFWEHVAEPQGSRAFLWQRVLEPTWKHIGDGCHLTRETWKDIERAQFSEVQLEWQPPPFRWLPVGPHIMGKAVK.

An N-terminal signal peptide occupies residues 1–23 (MDALVLFLQLLVLLLTLPLHLLA).

This sequence belongs to the methyltransferase superfamily.

The protein resides in the endoplasmic reticulum membrane. Its subcellular location is the lipid droplet. It is found in the microsome. It localises to the cytoplasm. The protein localises to the cytosol. It carries out the reaction a thiol + S-adenosyl-L-methionine = a methyl thioether + S-adenosyl-L-homocysteine + H(+). In terms of biological role, thiol S-methyltransferase that catalyzes the transfer of a methyl group from S-adenosyl-L-methionine to alkyl and phenolic thiol-containing acceptor substrates. Together with TMT1B accounts for most of S-thiol methylation activity in the endoplasmic reticulum of hepatocytes. Selectively methylates S-centered nucleophiles from metabolites such as hydrogen sulfide and dithiothreitol. The polypeptide is Thiol S-methyltransferase TMT1B (Mus musculus (Mouse)).